Here is a 265-residue protein sequence, read N- to C-terminus: tRNA pseudouridine synthase A (265 aa).

Asp52 (nucleophile) is an active-site residue. Tyr112 is a binding site for substrate.

The protein belongs to the tRNA pseudouridine synthase TruA family. As to quaternary structure, homodimer.

It catalyses the reaction uridine(38/39/40) in tRNA = pseudouridine(38/39/40) in tRNA. In terms of biological role, formation of pseudouridine at positions 38, 39 and 40 in the anticodon stem and loop of transfer RNAs. This chain is tRNA pseudouridine synthase A, found in Akkermansia muciniphila (strain ATCC BAA-835 / DSM 22959 / JCM 33894 / BCRC 81048 / CCUG 64013 / CIP 107961 / Muc).